Consider the following 274-residue polypeptide: 4-hydroxy-3-methylbut-2-enyl diphosphate reductase (274 aa).

Cys-12 serves as a coordination point for [4Fe-4S] cluster. 2 residues coordinate (2E)-4-hydroxy-3-methylbut-2-enyl diphosphate: His-36 and His-70. The dimethylallyl diphosphate site is built by His-36 and His-70. Residues His-36 and His-70 each contribute to the isopentenyl diphosphate site. Residue Cys-92 participates in [4Fe-4S] cluster binding. His-120 contributes to the (2E)-4-hydroxy-3-methylbut-2-enyl diphosphate binding site. Residue His-120 participates in dimethylallyl diphosphate binding. His-120 lines the isopentenyl diphosphate pocket. The active-site Proton donor is Glu-122. Thr-158 serves as a coordination point for (2E)-4-hydroxy-3-methylbut-2-enyl diphosphate. Cys-186 provides a ligand contact to [4Fe-4S] cluster. Ser-214, Ser-215, Asn-216, and Ser-258 together coordinate (2E)-4-hydroxy-3-methylbut-2-enyl diphosphate. Dimethylallyl diphosphate is bound by residues Ser-214, Ser-215, Asn-216, and Ser-258. Ser-214, Ser-215, Asn-216, and Ser-258 together coordinate isopentenyl diphosphate.

The protein belongs to the IspH family. The cofactor is [4Fe-4S] cluster.

The catalysed reaction is isopentenyl diphosphate + 2 oxidized [2Fe-2S]-[ferredoxin] + H2O = (2E)-4-hydroxy-3-methylbut-2-enyl diphosphate + 2 reduced [2Fe-2S]-[ferredoxin] + 2 H(+). It carries out the reaction dimethylallyl diphosphate + 2 oxidized [2Fe-2S]-[ferredoxin] + H2O = (2E)-4-hydroxy-3-methylbut-2-enyl diphosphate + 2 reduced [2Fe-2S]-[ferredoxin] + 2 H(+). It functions in the pathway isoprenoid biosynthesis; dimethylallyl diphosphate biosynthesis; dimethylallyl diphosphate from (2E)-4-hydroxy-3-methylbutenyl diphosphate: step 1/1. It participates in isoprenoid biosynthesis; isopentenyl diphosphate biosynthesis via DXP pathway; isopentenyl diphosphate from 1-deoxy-D-xylulose 5-phosphate: step 6/6. Catalyzes the conversion of 1-hydroxy-2-methyl-2-(E)-butenyl 4-diphosphate (HMBPP) into a mixture of isopentenyl diphosphate (IPP) and dimethylallyl diphosphate (DMAPP). Acts in the terminal step of the DOXP/MEP pathway for isoprenoid precursor biosynthesis. The chain is 4-hydroxy-3-methylbut-2-enyl diphosphate reductase from Campylobacter concisus (strain 13826).